The primary structure comprises 561 residues: Carboxylesterase 1E (561 aa).

The signal sequence occupies residues 1–18 (MCLYALILVFLAAFTAGG). Residues N79 and N107 are each glycosylated (N-linked (GlcNAc...) asparagine). C87 and C116 form a disulfide bridge. S221 acts as the Acyl-ester intermediate in catalysis. An intrachain disulfide couples C273 to C284. Active-site charge relay system residues include E353 and H466. The N-linked (GlcNAc...) asparagine glycan is linked to N489. Residues 558–561 (HTEL) carry the Prevents secretion from ER motif.

The protein belongs to the type-B carboxylesterase/lipase family. Expressed in liver.

The protein localises to the endoplasmic reticulum lumen. It localises to the microsome membrane. It carries out the reaction a carboxylic ester + H2O = an alcohol + a carboxylate + H(+). The enzyme catalyses all-trans-retinyl hexadecanoate + H2O = all-trans-retinol + hexadecanoate + H(+). In terms of biological role, involved in the detoxification of xenobiotics and in the activation of ester and amide prodrugs. Hydrolyzes retinyl esters. In Rattus norvegicus (Rat), this protein is Carboxylesterase 1E (Ces1e).